The chain runs to 28 residues: Phospholipase A2 2 (28 aa).

This sequence belongs to the phospholipase A2 family. Group I subfamily. Requires Ca(2+) as cofactor. In terms of tissue distribution, expressed by the venom gland.

Its subcellular location is the secreted. The enzyme catalyses a 1,2-diacyl-sn-glycero-3-phosphocholine + H2O = a 1-acyl-sn-glycero-3-phosphocholine + a fatty acid + H(+). Functionally, snake venom phospholipase A2 (PLA2) that inhibits neuromuscular transmission by blocking acetylcholine release from the nerve termini. PLA2 catalyzes the calcium-dependent hydrolysis of the 2-acyl groups in 3-sn-phosphoglycerides. The protein is Phospholipase A2 2 of Micrurus nigrocinctus (Central American coral snake).